We begin with the raw amino-acid sequence, 70 residues long: Insulin (70 aa).

3 disulfide bridges follow: cysteine 7–cysteine 56, cysteine 19–cysteine 69, and cysteine 55–cysteine 60. A propeptide spans 33-49 (FVDSLAGYSKHQNGGIS) (c peptide).

This sequence belongs to the insulin family. As to quaternary structure, heterodimer of a B chain and an A chain linked by two disulfide bonds.

The protein localises to the secreted. In terms of biological role, insulin decreases blood glucose concentration. It increases cell permeability to monosaccharides, amino acids and fatty acids. It accelerates glycolysis, the pentose phosphate cycle, and glycogen synthesis in liver. This Torpedo marmorata (Marbled electric ray) protein is Insulin (ins).